Consider the following 265-residue polypeptide: Large ribosomal subunit protein bL9m (265 aa).

The N-terminal 49 residues, 1-49 (MAASVAPGVRTLWWAGAAWLRQGGIRELFRPRIEGSTPGRDFSLSHYQS), are a transit peptide targeting the mitochondrion.

Belongs to the bacterial ribosomal protein bL9 family. Component of the mitochondrial ribosome large subunit (39S) which comprises a 16S rRNA and about 50 distinct proteins.

It is found in the mitochondrion. The polypeptide is Large ribosomal subunit protein bL9m (Mrpl9) (Mus musculus (Mouse)).